The following is a 232-amino-acid chain: Large ribosomal subunit protein uL1 (232 aa).

This sequence belongs to the universal ribosomal protein uL1 family. In terms of assembly, part of the 50S ribosomal subunit.

In terms of biological role, binds directly to 23S rRNA. The L1 stalk is quite mobile in the ribosome, and is involved in E site tRNA release. Functionally, protein L1 is also a translational repressor protein, it controls the translation of the L11 operon by binding to its mRNA. The sequence is that of Large ribosomal subunit protein uL1 from Jannaschia sp. (strain CCS1).